Here is a 563-residue protein sequence, read N- to C-terminus: Protein NRT1/ PTR FAMILY 5.9 (563 aa).

The helical transmembrane segment at 56 to 76 (TWAGFTSMLPLFSAPLADTYW) threads the bilayer. A Phosphothreonine modification is found at threonine 81. The next 10 helical transmembrane spans lie at 82 to 102 (ILASSSVYFVGLVGLTWTAFA), 110 to 130 (TISSYFLYSSLCLVSIGLGVL), 168 to 188 (FFQLWYFGVCTGSLMGVTVMA), 194 to 214 (FGWVLGFAIPGIVIFLSILVF), 317 to 337 (FPIWMMLLMFAVIFQLPATFF), 362 to 382 (TITLSIILLMPLYDKILIPIT), 394 to 414 (VMERMGVGMFLSIIAIVIAAI), 441 to 461 (IFWLLPQYILLGISDIFTVVG), 479 to 499 (FALYTSVFGVGSFVSAALISI), and 528 to 548 (WLLALTSTISFVVYIFLCKFF).

It belongs to the major facilitator superfamily. Proton-dependent oligopeptide transporter (POT/PTR) (TC 2.A.17) family. Expressed in roots and flowers.

The protein resides in the membrane. The protein is Protein NRT1/ PTR FAMILY 5.9 (NPF5.9) of Arabidopsis thaliana (Mouse-ear cress).